The following is a 404-amino-acid chain: Magnesium transporter NIPA4 (404 aa).

The Extracellular segment spans residues 1–55 (MELRVSNTSCENGSLLHLYCSSQEVLCQIVNDLSPEVPSNATFHSWQERIRQNYG). Asn-7, Asn-12, and Asn-40 each carry an N-linked (GlcNAc...) asparagine glycan. A helical membrane pass occupies residues 56–76 (FYIGLGLAFLSSFLIGSSVIL). Topologically, residues 77 to 102 (KKKGLLRLVATGATRAVDGGFGYLKD) are cytoplasmic. Residues 103-123 (AMWWAGFLTMAAGEVANFGAY) traverse the membrane as a helical segment. Position 124 (Ala-124) is a topological domain, extracellular. Residues 125–145 (FAPATVVTPLGALSVLISAIL) form a helical membrane-spanning segment. The Cytoplasmic portion of the chain corresponds to 146-153 (SSYFLRES). Residues 154 to 174 (LNLLGKLGCVICVAGSTVMVI) traverse the membrane as a helical segment. The Extracellular portion of the chain corresponds to 175–195 (HAPEEEKVTTIMEMASKMKDT). The helical transmembrane segment at 196–216 (GFIVFAVLLLVSCLILIFVIA) threads the bilayer. At 217–223 (PRYGQRN) the chain is on the cytoplasmic side. A helical membrane pass occupies residues 224–244 (ILIYIIICSVIGAFSVAAVKG). Topologically, residues 245–261 (LGITIKNFFQGLPVVRH) are extracellular. The chain crosses the membrane as a helical span at residues 262-282 (PLPYILSLILALSLSTQVNFL). Over 283 to 293 (NRALDIFNTSL) the chain is Cytoplasmic. The helical transmembrane segment at 294–314 (VFPIYYVFFTTVVVTSSIILF) threads the bilayer. The Extracellular portion of the chain corresponds to 315–324 (KEWYSMSAVD). A helical transmembrane segment spans residues 325-345 (IAGTLSGFVTIILGVFMLHAF). Residues 346–404 (KDLDISCASLPHMHKNPPPSPAPEPTVIRLEDKNVLVDNIELASTSSPEEKPKVFIIHS) are Cytoplasmic-facing.

It belongs to the NIPA family. In terms of tissue distribution, highly expressed in brain, lung, stomach, keratinocytes and leukocytes, and in all other tissues tested except liver, thyroid and fetal brain.

It localises to the cell membrane. It catalyses the reaction Mg(2+)(in) = Mg(2+)(out). Functionally, acts as a Mg(2+) transporter. Can also transport other divalent cations such as Ba(2+), Sr(2+) and Fe(2+) but to a much less extent than Mg(2+). May be a receptor for ligands (trioxilins A3 and B3) from the hepoxilin pathway. This Homo sapiens (Human) protein is Magnesium transporter NIPA4 (NIPAL4).